Consider the following 231-residue polypeptide: ATP-dependent dethiobiotin synthetase BioD (231 aa).

12–17 (DVGKTV) contacts ATP. Threonine 16 is a Mg(2+) binding site. Residue lysine 37 is part of the active site. Threonine 41 serves as a coordination point for substrate. ATP contacts are provided by residues aspartate 50, 109-112 (EGAG), 170-171 (GS), and 200-202 (PAG). Mg(2+) is bound by residues aspartate 50 and glutamate 109.

The protein belongs to the dethiobiotin synthetase family. Homodimer. Requires Mg(2+) as cofactor.

Its subcellular location is the cytoplasm. The enzyme catalyses (7R,8S)-7,8-diammoniononanoate + CO2 + ATP = (4R,5S)-dethiobiotin + ADP + phosphate + 3 H(+). It functions in the pathway cofactor biosynthesis; biotin biosynthesis; biotin from 7,8-diaminononanoate: step 1/2. Catalyzes a mechanistically unusual reaction, the ATP-dependent insertion of CO2 between the N7 and N8 nitrogen atoms of 7,8-diaminopelargonic acid (DAPA, also called 7,8-diammoniononanoate) to form a ureido ring. The polypeptide is ATP-dependent dethiobiotin synthetase BioD (Rhodococcus jostii (strain RHA1)).